Consider the following 447-residue polypeptide: Chordin-like protein 1 (447 aa).

A signal peptide spans 1–22 (MEGIKYIASLVFFFVFLEASKT). 2 consecutive VWFC domains span residues 30-95 (TYCM…PRCP) and 108-174 (KSCE…RVCR). The N-linked (GlcNAc...) asparagine glycan is linked to Asn113. Positions 174-176 (RGD) match the Cell attachment site motif. The segment at 199–219 (HSYLRSPYDPPPSRQAGGLPR) is disordered. In terms of domain architecture, VWFC 3 spans 253-318 (QVCVSNGKTY…LDGKCCKVCP (66 aa)). A glycan (N-linked (GlcNAc...) asparagine) is linked at Asn286.

The protein resides in the secreted. Its function is as follows. Seems to antagonize the function of BMP4 by binding to it and preventing its interaction with receptors. Alters the fate commitment of neural stem cells from gliogenesis to neurogenesis. Contributes to neuronal differentiation of neural stem cells in the brain by preventing the adoption of a glial fate. May play a crucial role in dorsoventral axis formation. May play a role in embryonic bone formation. Plays a role during anterior segment eye development. The sequence is that of Chordin-like protein 1 (Chrdl1) from Rattus norvegicus (Rat).